Reading from the N-terminus, the 345-residue chain is AP2-like ethylene-responsive transcription factor At1g16060 (345 aa).

Residues 15-62 are disordered; that stretch reads TRQSKKTSVENETGDDQSATSVVLKAKRKRRSQPRDAPPQRSSVHRGV. 2 DNA-binding regions (AP2/ERF) span residues 58–124 and 160–218; these read VHRG…LNFP and KYRG…TNFD. The interval 243–302 is disordered; sequence HSDLSPFIKPNHESDLSQSQSSSEDNDDRKTKLLKSSPLVAEEVIGPSTPPEIAPPRRSF.

This sequence belongs to the AP2/ERF transcription factor family. AP2 subfamily.

It is found in the nucleus. In terms of biological role, probably acts as a transcriptional activator. Binds to the GCC-box pathogenesis-related promoter element. May be involved in the regulation of gene expression by stress factors and by components of stress signal transduction pathways. In Arabidopsis thaliana (Mouse-ear cress), this protein is AP2-like ethylene-responsive transcription factor At1g16060.